Reading from the N-terminus, the 206-residue chain is Purine nucleoside phosphorylase aq_167 (206 aa).

Zn(2+) contacts are provided by His42, Cys78, and His93.

This sequence belongs to the purine nucleoside phosphorylase YfiH/LACC1 family. Homodimer. The cofactor is Cu(2+). Zn(2+) is required as a cofactor.

It carries out the reaction adenosine + phosphate = alpha-D-ribose 1-phosphate + adenine. It catalyses the reaction S-methyl-5'-thioadenosine + phosphate = 5-(methylsulfanyl)-alpha-D-ribose 1-phosphate + adenine. The catalysed reaction is inosine + phosphate = alpha-D-ribose 1-phosphate + hypoxanthine. The enzyme catalyses adenosine + H2O + H(+) = inosine + NH4(+). Functionally, purine nucleoside enzyme that catalyzes the phosphorolysis of adenosine and inosine nucleosides, yielding D-ribose 1-phosphate and the respective free bases, adenine and hypoxanthine. Also catalyzes the phosphorolysis of S-methyl-5'-thioadenosine into adenine and S-methyl-5-thio-alpha-D-ribose 1-phosphate. Also has adenosine deaminase activity. This chain is Purine nucleoside phosphorylase aq_167, found in Aquifex aeolicus (strain VF5).